The chain runs to 324 residues: Acetyl-coenzyme A carboxylase carboxyl transferase subunit alpha (324 aa).

The 255-residue stretch at Q44–E298 folds into the CoA carboxyltransferase C-terminal domain.

The protein belongs to the AccA family. Acetyl-CoA carboxylase is a heterohexamer composed of biotin carboxyl carrier protein (AccB), biotin carboxylase (AccC) and two subunits each of ACCase subunit alpha (AccA) and ACCase subunit beta (AccD).

Its subcellular location is the cytoplasm. It catalyses the reaction N(6)-carboxybiotinyl-L-lysyl-[protein] + acetyl-CoA = N(6)-biotinyl-L-lysyl-[protein] + malonyl-CoA. The protein operates within lipid metabolism; malonyl-CoA biosynthesis; malonyl-CoA from acetyl-CoA: step 1/1. In terms of biological role, component of the acetyl coenzyme A carboxylase (ACC) complex. First, biotin carboxylase catalyzes the carboxylation of biotin on its carrier protein (BCCP) and then the CO(2) group is transferred by the carboxyltransferase to acetyl-CoA to form malonyl-CoA. This chain is Acetyl-coenzyme A carboxylase carboxyl transferase subunit alpha, found in Rippkaea orientalis (strain PCC 8801 / RF-1) (Cyanothece sp. (strain PCC 8801)).